Here is a 208-residue protein sequence, read N- to C-terminus: Ribosomal RNA large subunit methyltransferase E (208 aa).

S-adenosyl-L-methionine contacts are provided by Gly-63, Trp-65, Asp-83, Asp-99, and Asp-124. Lys-164 serves as the catalytic Proton acceptor.

It belongs to the class I-like SAM-binding methyltransferase superfamily. RNA methyltransferase RlmE family.

It localises to the cytoplasm. It carries out the reaction uridine(2552) in 23S rRNA + S-adenosyl-L-methionine = 2'-O-methyluridine(2552) in 23S rRNA + S-adenosyl-L-homocysteine + H(+). Specifically methylates the uridine in position 2552 of 23S rRNA at the 2'-O position of the ribose in the fully assembled 50S ribosomal subunit. This is Ribosomal RNA large subunit methyltransferase E from Salmonella agona (strain SL483).